Reading from the N-terminus, the 257-residue chain is NAD-capped RNA hydrolase NudC (257 aa).

R69 provides a ligand contact to substrate. C98 and C101 together coordinate Zn(2+). E111 lines the substrate pocket. Zn(2+) contacts are provided by C116 and C119. A substrate-binding site is contributed by Y124. One can recognise a Nudix hydrolase domain in the interval 125-248 (PQIAPCIIVA…TVARRLIEDT (124 aa)). A divalent metal cation is bound by residues A158, E174, and E178. The Nudix box signature appears at 159-180 (GFVEVGETLEQAAAREIFEESR). Residue 192-199 (QPWPFPHS) participates in substrate binding. E219 is an a divalent metal cation binding site. A substrate-binding site is contributed by A241.

This sequence belongs to the Nudix hydrolase family. NudC subfamily. Homodimer. The cofactor is Mg(2+). Mn(2+) serves as cofactor. Requires Zn(2+) as cofactor.

It carries out the reaction a 5'-end NAD(+)-phospho-ribonucleoside in mRNA + H2O = a 5'-end phospho-adenosine-phospho-ribonucleoside in mRNA + beta-nicotinamide D-ribonucleotide + 2 H(+). The catalysed reaction is NAD(+) + H2O = beta-nicotinamide D-ribonucleotide + AMP + 2 H(+). It catalyses the reaction NADH + H2O = reduced beta-nicotinamide D-ribonucleotide + AMP + 2 H(+). MRNA decapping enzyme that specifically removes the nicotinamide adenine dinucleotide (NAD) cap from a subset of mRNAs by hydrolyzing the diphosphate linkage to produce nicotinamide mononucleotide (NMN) and 5' monophosphate mRNA. The NAD-cap is present at the 5'-end of some mRNAs and stabilizes RNA against 5'-processing. Has preference for mRNAs with a 5'-end purine. Catalyzes the hydrolysis of a broad range of dinucleotide pyrophosphates. In Edwardsiella ictaluri (strain 93-146), this protein is NAD-capped RNA hydrolase NudC.